Here is a 267-residue protein sequence, read N- to C-terminus: Type III pantothenate kinase (267 aa).

6-13 (DSGNSRLK) contacts ATP. Residues Y96 and 103-106 (GADR) contribute to the substrate site. Residue D105 is the Proton acceptor of the active site. T131 is a binding site for ATP. T181 contributes to the substrate binding site.

This sequence belongs to the type III pantothenate kinase family. In terms of assembly, homodimer. NH4(+) is required as a cofactor. Requires K(+) as cofactor.

It is found in the cytoplasm. It catalyses the reaction (R)-pantothenate + ATP = (R)-4'-phosphopantothenate + ADP + H(+). The protein operates within cofactor biosynthesis; coenzyme A biosynthesis; CoA from (R)-pantothenate: step 1/5. Catalyzes the phosphorylation of pantothenate (Pan), the first step in CoA biosynthesis. In terms of biological role, activates transcription of the pertussis toxin operon in a BvgAS-dependent manner. May interact with the alpha subunit of RNA polymerase. The sequence is that of Type III pantothenate kinase (coaX) from Bordetella pertussis (strain Tohama I / ATCC BAA-589 / NCTC 13251).